Here is a 347-residue protein sequence, read N- to C-terminus: MADAADSSMALVHSSLADSVLTSPRTLRQGQKWEVEYARYFGTPRRDPTAAPPSGLRYIMRGVHRHQGTWIPASCPASLCVCHPSLPSAVPVLTISIGDVVFEEHFVSILNFSWPQVTCVTQCPIRGSRVVFVSFCDKFKQIQKFAVRFPQPCDAESFLSCVECSCGSSGTMDIIPFGSDYVCEDSSASEYIVSNGLHHRLDDASNLEEQCFDHTIDEPPMNYHEETDQHVLEPLSASNTSNNSAFPPSFNQMLKSCSIDYDQEEPCPLAASNHVLQEVYVLDTSHDVANEERTAGKGMDAAEGVDASILTYDLMARIKTYMADESFNDMLLKLDKAIDELGGDMSL.

It is found in the cytoplasm. Required for accurate chromosome segregation in meiosis. Required for pairing to occur between homologous chromosomes. Acts in early recombination steps and ensures pairing fidelity and proper repair of meiotic DNA double-strand-breaks. Regulates recombination and pairing of homologous chromosomes during meiotic prophase by controlling transport of RAD50 from cytoplasm to the nucleus. May affect pairing of the gene-rich fraction of the genome rather than preventing pairing between repetitive DNA elements. This is Protein POOR HOMOLOGOUS SYNAPSIS 1 from Zea mays (Maize).